An 89-amino-acid chain; its full sequence is uncharacterized protein (89 aa).

Positions 1 to 19 (MQLTKTQFVRCVFLLLANS) are cleaved as a signal peptide.

This is an uncharacterized protein from Sulfolobus islandicus filamentous virus (isolate Iceland/Hveragerdi) (SIFV).